The primary structure comprises 188 residues: UPF0301 protein XCV3063 (188 aa).

The protein belongs to the UPF0301 (AlgH) family.

The sequence is that of UPF0301 protein XCV3063 from Xanthomonas euvesicatoria pv. vesicatoria (strain 85-10) (Xanthomonas campestris pv. vesicatoria).